The chain runs to 382 residues: ATP phosphoribosyltransferase regulatory subunit (382 aa).

The protein belongs to the class-II aminoacyl-tRNA synthetase family. HisZ subfamily. As to quaternary structure, heteromultimer composed of HisG and HisZ subunits.

It is found in the cytoplasm. Its pathway is amino-acid biosynthesis; L-histidine biosynthesis; L-histidine from 5-phospho-alpha-D-ribose 1-diphosphate: step 1/9. Its function is as follows. Required for the first step of histidine biosynthesis. May allow the feedback regulation of ATP phosphoribosyltransferase activity by histidine. The chain is ATP phosphoribosyltransferase regulatory subunit from Burkholderia cenocepacia (strain ATCC BAA-245 / DSM 16553 / LMG 16656 / NCTC 13227 / J2315 / CF5610) (Burkholderia cepacia (strain J2315)).